A 420-amino-acid polypeptide reads, in one-letter code: Shaggy-related protein kinase delta (420 aa).

A disordered region spans residues 1-61 (MESHLGNGVG…DIIDGVGAEP (61 aa)). Over residues 10 to 26 (GSSRSAKNTKNTSSSVD) the composition is skewed to polar residues. Positions 28–41 (LSRDMLEMKIRDKT) are enriched in basic and acidic residues. Residues 42–53 (EADEERDSEPDI) are compositionally biased toward acidic residues. Positions 82–366 (YIAEHVVGTG…AVEACIHPFF (285 aa)) constitute a Protein kinase domain. Residues 88–96 (VGTGSFGMV) and lysine 111 each bind ATP. Aspartate 207 acts as the Proton acceptor in catalysis. Position 242 is a phosphotyrosine (tyrosine 242).

This sequence belongs to the protein kinase superfamily. CMGC Ser/Thr protein kinase family. GSK-3 subfamily. Autophosphorylated mainly on threonine and serine residues.

The catalysed reaction is L-seryl-[protein] + ATP = O-phospho-L-seryl-[protein] + ADP + H(+). It catalyses the reaction L-threonyl-[protein] + ATP = O-phospho-L-threonyl-[protein] + ADP + H(+). Its function is as follows. May mediate extracellular signals to regulate transcription in differentiating cells. The polypeptide is Shaggy-related protein kinase delta (ASK4) (Arabidopsis thaliana (Mouse-ear cress)).